A 203-amino-acid polypeptide reads, in one-letter code: Nucleoside triphosphate pyrophosphatase (203 aa).

Asp-78 functions as the Proton acceptor in the catalytic mechanism.

This sequence belongs to the Maf family. A divalent metal cation is required as a cofactor.

It is found in the cytoplasm. The enzyme catalyses a ribonucleoside 5'-triphosphate + H2O = a ribonucleoside 5'-phosphate + diphosphate + H(+). It catalyses the reaction a 2'-deoxyribonucleoside 5'-triphosphate + H2O = a 2'-deoxyribonucleoside 5'-phosphate + diphosphate + H(+). Nucleoside triphosphate pyrophosphatase. May have a dual role in cell division arrest and in preventing the incorporation of modified nucleotides into cellular nucleic acids. This is Nucleoside triphosphate pyrophosphatase from Prochlorococcus marinus (strain MIT 9301).